The following is a 218-amino-acid chain: Small ribosomal subunit protein uS3c (218 aa).

One can recognise a KH type-2 domain in the interval 43–118 (IKNYVQKNPR…RLNIAIARIS (76 aa)).

Belongs to the universal ribosomal protein uS3 family. As to quaternary structure, part of the 30S ribosomal subunit.

It is found in the plastid. It localises to the chloroplast. This Acorus calamus (Sweet flag) protein is Small ribosomal subunit protein uS3c (rps3).